A 240-amino-acid polypeptide reads, in one-letter code: Leucyl/phenylalanyl-tRNA--protein transferase (240 aa).

The protein belongs to the L/F-transferase family.

The protein resides in the cytoplasm. It catalyses the reaction N-terminal L-lysyl-[protein] + L-leucyl-tRNA(Leu) = N-terminal L-leucyl-L-lysyl-[protein] + tRNA(Leu) + H(+). The catalysed reaction is N-terminal L-arginyl-[protein] + L-leucyl-tRNA(Leu) = N-terminal L-leucyl-L-arginyl-[protein] + tRNA(Leu) + H(+). The enzyme catalyses L-phenylalanyl-tRNA(Phe) + an N-terminal L-alpha-aminoacyl-[protein] = an N-terminal L-phenylalanyl-L-alpha-aminoacyl-[protein] + tRNA(Phe). In terms of biological role, functions in the N-end rule pathway of protein degradation where it conjugates Leu, Phe and, less efficiently, Met from aminoacyl-tRNAs to the N-termini of proteins containing an N-terminal arginine or lysine. The chain is Leucyl/phenylalanyl-tRNA--protein transferase from Maridesulfovibrio salexigens (strain ATCC 14822 / DSM 2638 / NCIMB 8403 / VKM B-1763) (Desulfovibrio salexigens).